The primary structure comprises 386 residues: Glyceraldehyde-3-phosphate dehydrogenase, chloroplastic (386 aa).

The transit peptide at 1 to 45 (MAYFKAVAYLAALASAAAFNPGSSFVPRLNAPATQPKAAKMTGPT) directs the protein to the chloroplast. Residues 58–59 (RI) and R125 each bind NADP(+). D-glyceraldehyde 3-phosphate is bound by residues 197–199 (SCT), T228, 257–258 (TG), and R280. C198 serves as the catalytic Nucleophile. N362 is a binding site for NADP(+).

Belongs to the glyceraldehyde-3-phosphate dehydrogenase family. Homotetramer.

It localises to the plastid. It is found in the chloroplast. It catalyses the reaction D-glyceraldehyde 3-phosphate + phosphate + NADP(+) = (2R)-3-phospho-glyceroyl phosphate + NADPH + H(+). The enzyme catalyses D-glyceraldehyde 3-phosphate + phosphate + NAD(+) = (2R)-3-phospho-glyceroyl phosphate + NADH + H(+). The protein operates within carbohydrate biosynthesis; Calvin cycle. This chain is Glyceraldehyde-3-phosphate dehydrogenase, chloroplastic (GAPC1), found in Guillardia theta (Cryptophyte).